The sequence spans 333 residues: tRNA N6-adenosine threonylcarbamoyltransferase (333 aa).

Fe cation-binding residues include His111 and His115. Substrate is bound by residues 134-138 (LVSGG), Asp167, Gly180, and Asn272. Asp300 lines the Fe cation pocket.

The protein belongs to the KAE1 / TsaD family. It depends on Fe(2+) as a cofactor.

The protein resides in the cytoplasm. The enzyme catalyses L-threonylcarbamoyladenylate + adenosine(37) in tRNA = N(6)-L-threonylcarbamoyladenosine(37) in tRNA + AMP + H(+). In terms of biological role, required for the formation of a threonylcarbamoyl group on adenosine at position 37 (t(6)A37) in tRNAs that read codons beginning with adenine. Is involved in the transfer of the threonylcarbamoyl moiety of threonylcarbamoyl-AMP (TC-AMP) to the N6 group of A37, together with TsaE and TsaB. TsaD likely plays a direct catalytic role in this reaction. The protein is tRNA N6-adenosine threonylcarbamoyltransferase of Legionella pneumophila (strain Lens).